The primary structure comprises 266 residues: Small ribosomal subunit protein eS1 (266 aa).

The interval 235–266 (GGAGGAAKASGDDTGAKVERADGYEPPIQETV) is disordered. Residues 244-257 (SGDDTGAKVERADG) show a composition bias toward basic and acidic residues.

Belongs to the eukaryotic ribosomal protein eS1 family. As to quaternary structure, component of the small ribosomal subunit. Mature ribosomes consist of a small (40S) and a large (60S) subunit. The 40S subunit contains about 33 different proteins and 1 molecule of RNA (18S). The 60S subunit contains about 49 different proteins and 3 molecules of RNA (28S, 5.8S and 5S).

It is found in the cytoplasm. Its function is as follows. Component of the small ribosomal subunit. The ribosome is a large ribonucleoprotein complex responsible for the synthesis of proteins in the cell. The polypeptide is Small ribosomal subunit protein eS1 (rps3a) (Oryzias latipes (Japanese rice fish)).